The following is a 317-amino-acid chain: Glycine--tRNA ligase alpha subunit (317 aa).

The protein belongs to the class-II aminoacyl-tRNA synthetase family. In terms of assembly, tetramer of two alpha and two beta subunits.

The protein resides in the cytoplasm. It carries out the reaction tRNA(Gly) + glycine + ATP = glycyl-tRNA(Gly) + AMP + diphosphate. The chain is Glycine--tRNA ligase alpha subunit from Pseudomonas fluorescens (strain SBW25).